A 497-amino-acid polypeptide reads, in one-letter code: tRNA (adenine(58)-N(1))-methyltransferase non-catalytic subunit TRM6 (497 aa).

2 disordered regions span residues 1–20 (MEGSGEQPGPQPQHPGDHRI) and 69–100 (TSGGSLQPKKKREEPTAETKEAGTDNRNIVDD). Over residues 79–100 (KREEPTAETKEAGTDNRNIVDD) the composition is skewed to basic and acidic residues. Residue 94-104 (NRNIVDDGKSQ) participates in substrate binding. Position 107 is a phosphothreonine (T107). Residues 145–154 (KYIKKKKKKY) and 175–182 (REPGKINH) contribute to the substrate site. The disordered stretch occupies residues 276–354 (SSEPKDSALV…EKQRRQEEQR (79 aa)). Phosphoserine occurs at positions 298 and 305. Basic and acidic residues predominate over residues 327–354 (DPEHKGPKERGSKKDYIQEKQRRQEEQR). Residues R349, R377, 415–423 (RERGGVINL), and 434–441 (QVLPDRSH) each bind substrate. Positions 472-497 (SNASTLESHETEEPAAKKRKCPESDS) are disordered. The segment covering 478–497 (ESHETEEPAAKKRKCPESDS) has biased composition (basic and acidic residues).

Belongs to the TRM6/GCD10 family. As to quaternary structure, heterotetramer; composed of two copies of TRMT6 and two copies of TRMT61A. As to expression, expressed in brain, liver, testis and ovary.

It is found in the nucleus. In terms of biological role, substrate-binding subunit of tRNA (adenine-N(1)-)-methyltransferase, which catalyzes the formation of N(1)-methyladenine at position 58 (m1A58) in initiator methionyl-tRNA. Together with the TRMT61A catalytic subunit, part of a mRNA N(1)-methyltransferase complex that mediates methylation of adenosine residues at the N(1) position of a small subset of mRNAs: N(1) methylation takes place in tRNA T-loop-like structures of mRNAs and is only present at low stoichiometries. The polypeptide is tRNA (adenine(58)-N(1))-methyltransferase non-catalytic subunit TRM6 (TRMT6) (Homo sapiens (Human)).